The primary structure comprises 66 residues: Large ribosomal subunit protein bL31 (66 aa).

The Zn(2+) site is built by Cys-16, Cys-18, Cys-36, and Cys-39.

It belongs to the bacterial ribosomal protein bL31 family. Type A subfamily. As to quaternary structure, part of the 50S ribosomal subunit. Zn(2+) is required as a cofactor.

In terms of biological role, binds the 23S rRNA. The chain is Large ribosomal subunit protein bL31 from Natranaerobius thermophilus (strain ATCC BAA-1301 / DSM 18059 / JW/NM-WN-LF).